We begin with the raw amino-acid sequence, 492 residues long: Spindle assembly abnormal protein 6 (492 aa).

One can recognise a PISA domain in the interval Ser-46–Leu-98. Residues Lys-192 to Phe-407 are a coiled coil.

In terms of assembly, nine homodimers form a cartwheel structure with an internal diameter of 23 nM and radial spokes connecting to the microtubule triplets. Interacts with sas-5.

The protein resides in the cytoplasm. Its subcellular location is the cytoskeleton. It is found in the microtubule organizing center. The protein localises to the centrosome. It localises to the centriole. In terms of biological role, central scaffolding component of the centrioles ensuring their 9-fold symmetry. Required for centrosome biogenesis and duplication. The chain is Spindle assembly abnormal protein 6 from Caenorhabditis elegans.